We begin with the raw amino-acid sequence, 446 residues long: Plant intracellular Ras-group-related LRR protein 3 (446 aa).

The stretch at 65 to 100 (EACRAVVRLEETHDAYEALLQEAEGRLEAVYRSAME) forms a coiled coil. The disordered stretch occupies residues 101-121 (GKDLEEPDGRDESAAAAAGDD). LRR repeat units lie at residues 138 to 160 (GKPV…AFGR), 161 to 184 (IQGL…IGGL), 185 to 207 (DHLE…IGLL), 208 to 230 (LNLR…ISKC), 232 to 254 (SLIE…GYEL), 255 to 277 (VNLR…ICEM), 279 to 300 (SLYL…IGKL), 301 to 324 (SSLE…SFGD), 325 to 347 (LLNL…NFGR), and 349 to 371 (DKLE…IVNK). The GVYW motif lies at 372–384 (GVDAVKEYMLQRW).

The protein belongs to the SHOC2 family. As to expression, widely expressed.

Functionally, leucine-rich repeat protein that likely mediates protein interactions, possibly in the context of signal transduction. This is Plant intracellular Ras-group-related LRR protein 3 (IRL3) from Oryza sativa subsp. japonica (Rice).